The chain runs to 456 residues: Keratin, type I cuticular Ha8 (456 aa).

Positions 1-104 are head; sequence MTSSYSSSSC…YGENTLNGHE (104 aa). In terms of domain architecture, IF rod spans 104-415; the sequence is EKETMQFLND…NLLESEDCKL (312 aa). The tract at residues 105-139 is coil 1A; that stretch reads KETMQFLNDRLANYLEKVRQLEQENAELEATLLER. Residues 140–150 form a linker 1 region; sequence SKCHESTVCPD. The interval 151 to 251 is coil 1B; that stretch reads YQSYFHTIEE…HEQEVKILRS (101 aa). The segment at 252–267 is linker 12; the sequence is QLGEKLRIELDIEPTI. The tract at residues 268-411 is coil 2; the sequence is DLNRVLGEMR…ATYRNLLESE (144 aa). Residues 412-456 are tail; it reads DCKLPCNPCSTSPSCVTAPCAPRPSCGPCTTCGPTCGASTTGSRF.

It belongs to the intermediate filament family.

The protein is Keratin, type I cuticular Ha8 (KRT38) of Homo sapiens (Human).